The following is a 30-amino-acid chain: Cytochrome b6-f complex subunit 8 (30 aa).

A helical transmembrane segment spans residues 4–24 (IISLGWGSLLAIFSFSIALVV).

It belongs to the PetN family. As to quaternary structure, the 4 large subunits of the cytochrome b6-f complex are cytochrome b6, subunit IV (17 kDa polypeptide, PetD), cytochrome f and the Rieske protein, while the 4 small subunits are PetG, PetL, PetM and PetN. The complex functions as a dimer.

It localises to the plastid. The protein resides in the chloroplast thylakoid membrane. In terms of biological role, component of the cytochrome b6-f complex, which mediates electron transfer between photosystem II (PSII) and photosystem I (PSI), cyclic electron flow around PSI, and state transitions. The sequence is that of Cytochrome b6-f complex subunit 8 from Gracilaria tenuistipitata var. liui (Red alga).